A 2593-amino-acid polypeptide reads, in one-letter code: Citrinin polyketide synthase (2593 aa).

The tract at residues 70-224 (KLLENLNAWI…YVSVIVDQRR (155 aa)) is N-terminal acylcarrier protein transacylase domain (SAT). Residue cysteine 139 is the Nucleophile; for transacylase activity of the active site. The Proton donor/acceptor; for transacylase activity role is filled by histidine 258. One can recognise a Ketosynthase family 3 (KS3) domain in the interval 391–806 (DERIAVIGMA…GSNASMVVTQ (416 aa)). Catalysis depends on for beta-ketoacyl synthase activity residues cysteine 555, histidine 690, and histidine 729. Positions 906 to 1191 (PDPKPVILCF…VAIWLEAGSN (286 aa)) are malonyl-CoA:ACP transacylase (MAT) domain. The interval 1291–1424 (PKGLTTFVGY…GTITFQAADS (134 aa)) is N-terminal hotdog fold. A PKS/mFAS DH domain is found at 1291–1603 (PKGLTTFVGY…YQKVSISGIR (313 aa)). Positions 1322 to 1601 (LLSGHIMANA…ISYQKVSISG (280 aa)) are product template (PT) domain. Residue histidine 1326 is the Proton acceptor; for dehydratase activity of the active site. The interval 1451–1603 (VADDILQGRN…YQKVSISGIR (153 aa)) is C-terminal hotdog fold. The active-site Proton donor; for dehydratase activity is the aspartate 1508. The disordered stretch occupies residues 1636–1662 (VADSPLVDGSSTAVSGTPPTKKAPKAP). In terms of domain architecture, Carrier spans 1661-1738 (APSVDITGKM…SLVECMQRIL (78 aa)). Serine 1689 is modified (O-(pantetheine 4'-phosphoryl)serine). Active-site for methyltransferase activity residues include tyrosine 1955, histidine 2067, and glutamate 2093. Residues 1960 to 2134 (INAVWIQQAE…ATHWKKILTS (175 aa)) form a methyltransferase (CMeT) domain region. The interval 2215–2459 (PAPTGHCVLV…KALPDFDGSL (245 aa)) is NADPH-binding (R) domain.

It depends on pantetheine 4'-phosphate as a cofactor.

It functions in the pathway mycotoxin biosynthesis. Functionally, non-reducing polyketide synthase; part of the gene cluster that mediates the biosynthesis of the mycotoxin citrinin, a hepato-nephrotoxic compound to humans due to inhibition of respiration complex III. The pathway begins with the synthesis of a keto-aldehyde intermediate by the citrinin PKS (pksCT) from successive condensations of 4 malonyl-CoA units, presumably with a simple acetyl-CoA starter unit. Release of the keto-aldehyde intermediate is consistent with the presence of the C-terminal reductive release domain. Mp11 collaborates with pksCT by catalyzing the hydrolysis of ACP-bound acyl intermediates to free the ACP from stalled intermediates. Mpl2 then catalyzes the oxidation of the C-12 methyl of the ketone intermediate to an alcohol intermediate which is further oxidized by the oxidoreductase mpl7 to produce a bisaldehyde intermediate. The fourth catalytic step is catalyzed by the mpl4 aldehyde dehydrogenase. The final transformation is the reduction of C-3 by mpl6 to provide the chemically stable citrinin nucleus. This chain is Citrinin polyketide synthase, found in Monascus purpureus (Red mold).